We begin with the raw amino-acid sequence, 406 residues long: RILP-like protein 1 (406 aa).

Ser-7 bears the Phosphoserine mark. Positions 10 to 97 constitute an RH1 domain; that stretch reads AALSALEKNV…RVERMDRIEK (88 aa). Cys-47 is modified (S-nitrosocysteine). A coiled-coil region spans residues 76–258; that stretch reads ELDELRLELD…KLRERLQGEH (183 aa). 2 disordered regions span residues 255-280 and 330-354; these read QGEH…ESIS and EIEE…QPES. Residue Ser-259 is modified to Phosphoserine. Residues 262–280 show a composition bias toward acidic residues; the sequence is GEEEEAEIQPQPDGEESIS. The 66-residue stretch at 294–359 folds into the RH2 domain; the sequence is RPRFTLQELR…PQPESGIKRL (66 aa).

Belongs to the RILPL family. As to quaternary structure, interacts (when S-nitrosylated) with GAPDH. Interacts with RAB8A; interaction is dependent on the phosphorylation of 'Thr-72' of RAB8A. Interacts with RAB10 and RAB12; the interaction is dependent on the phosphorylation of 'Thr-73' of RAB10, and 'Ser-105' of RAB12. Post-translationally, S-nitrosylation is required for the interaction with GAPDH.

The protein localises to the cytoplasm. It localises to the cytosol. It is found in the cell projection. Its subcellular location is the cilium. The protein resides in the cytoskeleton. The protein localises to the microtubule organizing center. It localises to the centrosome. It is found in the centriole. In terms of biological role, neuroprotective protein, which acts by sequestring GAPDH in the cytosol and prevent the apoptotic function of GAPDH in the nucleus. Competes with SIAH1 for binding GAPDH. Does not regulate lysosomal morphology and distribution. Plays a role in the regulation of cell shape and polarity. Plays a role in cellular protein transport, including protein transport away from primary cilia. Binds to RAB10 following LRRK2-mediated RAB10 phosphorylation which leads to inhibition of ciliogenesis. In Mus musculus (Mouse), this protein is RILP-like protein 1 (Rilpl1).